A 210-amino-acid polypeptide reads, in one-letter code: Na(+)-translocating NADH-quinone reductase subunit D (210 aa).

6 helical membrane passes run 14–34 (PIIN…ALAV), 42–62 (LVMT…ISLI), 72–92 (IIVQ…VLQA), 96–116 (AISK…IVMG), 131–151 (FMDG…VGVV), and 178–198 (NGLL…IWLI).

This sequence belongs to the NqrDE/RnfAE family. In terms of assembly, composed of six subunits; NqrA, NqrB, NqrC, NqrD, NqrE and NqrF.

It is found in the cell inner membrane. The enzyme catalyses a ubiquinone + n Na(+)(in) + NADH + H(+) = a ubiquinol + n Na(+)(out) + NAD(+). In terms of biological role, NQR complex catalyzes the reduction of ubiquinone-1 to ubiquinol by two successive reactions, coupled with the transport of Na(+) ions from the cytoplasm to the periplasm. NqrA to NqrE are probably involved in the second step, the conversion of ubisemiquinone to ubiquinol. This is Na(+)-translocating NADH-quinone reductase subunit D from Shewanella frigidimarina (strain NCIMB 400).